The chain runs to 399 residues: MKILVINSGSSSIKFKLYDMSDESVICKGLIEQIGAKNSYAKIVTKTGEIAEKREEIPDHGTGIDVMNELLFNSHALTSLDEIDGVGHRVVQGADLFNDAVLVDDDVLQKIEELIPLAPLHNPAHLAGMKETLKVRPDIPNVAVFDTVFHQTMPKSSYMYPLPIEFYEKYKIRRYGAHGTSHQFVAKAGAKILGVDFDHFSCITLHLGNGASIAAIKNGKCIDTSMGLTPLEGLMMGTRCGSIDPAIVPFLMKNANLSGEEIDTIMNKKSGLLAIGGSNDMREIEARMDAGDENAKLAFEMFVLRIKKYIGAYISILGEINAIIFTAGIGENDARIREAVCSGLEIFGIRMDKDKNAAKKDEPRRVGLPETKVRIIIVPTDEELAIAEDTLRIINQSKK.

Mg(2+) is bound at residue asparagine 7. Position 14 (lysine 14) interacts with ATP. Position 89 (arginine 89) interacts with substrate. The active-site Proton donor/acceptor is the aspartate 146. Residues 206–210, 280–282, and 328–332 each bind ATP; these read HLGNG, DMR, and GIGEN. Glutamate 382 provides a ligand contact to Mg(2+).

Belongs to the acetokinase family. As to quaternary structure, homodimer. It depends on Mg(2+) as a cofactor. Mn(2+) serves as cofactor.

The protein resides in the cytoplasm. It catalyses the reaction acetate + ATP = acetyl phosphate + ADP. Its pathway is metabolic intermediate biosynthesis; acetyl-CoA biosynthesis; acetyl-CoA from acetate: step 1/2. Its function is as follows. Catalyzes the formation of acetyl phosphate from acetate and ATP. Can also catalyze the reverse reaction. The protein is Acetate kinase of Campylobacter fetus subsp. fetus (strain 82-40).